A 292-amino-acid polypeptide reads, in one-letter code: MGNTYCILGGCIEQASVGVVERWGRFEHIAEPGCHFFNPLAGQWLAGVLSTRIKSLDVKIETKTKDNVFVQLVCSIQYRVVKASADDAFYELQNPKEQIQAYVFDVVRALVPMMTLDALFEQKGEVAKSVLEELEKVMGAYGYSIEHILMVDIIPDPSVRKAMNEINAAQRLQLASVYKGEAEKILQVKRAEAEAEAKYLGGVGVARQRQAITDGLRENILNFSDKVEGTSAKEVMDLIMITQYFDTIRDLGNSSKNTTVFLPHGPGHVRDISDQIRNGMMEAAASTQVNDV.

Glycine 2 carries the N-myristoyl glycine lipid modification.

As to quaternary structure, self-interacts and forms heteromers. Interacts with NB-LRR class of R proteins before R proteins (e.g. RPS2 or RPM1) are activated by the effectors.

Its subcellular location is the cell membrane. In Arabidopsis thaliana (Mouse-ear cress), this protein is Hypersensitive-induced response protein 4 (HIR4).